A 76-amino-acid polypeptide reads, in one-letter code: Small ribosomal subunit protein bS18 (76 aa).

The protein belongs to the bacterial ribosomal protein bS18 family. Part of the 30S ribosomal subunit. Forms a tight heterodimer with protein bS6.

Functionally, binds as a heterodimer with protein bS6 to the central domain of the 16S rRNA, where it helps stabilize the platform of the 30S subunit. The sequence is that of Small ribosomal subunit protein bS18 from Xanthomonas campestris pv. campestris (strain 8004).